Reading from the N-terminus, the 337-residue chain is Deoxyhypusine hydroxylase (337 aa).

2 HEAT-like PBS-type repeats span residues 73–99 (LKHELAYCLGQTGNTAAVKPLRQVLSD) and 106–132 (CRHEAAEALGALGWADNLDILREYRDR). Residues His75, Glu76, His108, and Glu109 each coordinate Fe cation. The segment covering 156-165 (AERQKEKLRP) has biased composition (basic and acidic residues). The segment at 156–183 (AERQKEKLRPSDFASIDPAPPMPESDKE) is disordered. 3 HEAT-like PBS-type repeats span residues 202-235 (SRYRAMFALRDLASPPDLPTATPAVLALAKGLSD), 240-266 (FRHEIAFVFGQLSHPASIPALTEALSN), and 273-300 (VRHEAAEALGSLGEKDGVEDTLRKFLHD). Fe cation contacts are provided by His242, Glu243, His275, and Glu276.

The protein belongs to the deoxyhypusine hydroxylase family. Fe(2+) serves as cofactor.

The protein resides in the cytoplasm. It is found in the nucleus. The catalysed reaction is [eIF5A protein]-deoxyhypusine + AH2 + O2 = [eIF5A protein]-hypusine + A + H2O. It functions in the pathway protein modification; eIF5A hypusination. Functionally, catalyzes the hydroxylation of the N(6)-(4-aminobutyl)-L-lysine intermediate to form hypusine, an essential post-translational modification only found in mature eIF-5A factor. The polypeptide is Deoxyhypusine hydroxylase (Gibberella zeae (strain ATCC MYA-4620 / CBS 123657 / FGSC 9075 / NRRL 31084 / PH-1) (Wheat head blight fungus)).